Consider the following 694-residue polypeptide: Elongation factor G (694 aa).

The 275-residue stretch at Asp8 to Leu282 folds into the tr-type G domain. GTP-binding positions include Ala17–Thr24, Asp81–His85, and Asn135–Asp138. Residues Ile284–Asp303 are disordered.

This sequence belongs to the TRAFAC class translation factor GTPase superfamily. Classic translation factor GTPase family. EF-G/EF-2 subfamily.

It localises to the cytoplasm. Its function is as follows. Catalyzes the GTP-dependent ribosomal translocation step during translation elongation. During this step, the ribosome changes from the pre-translocational (PRE) to the post-translocational (POST) state as the newly formed A-site-bound peptidyl-tRNA and P-site-bound deacylated tRNA move to the P and E sites, respectively. Catalyzes the coordinated movement of the two tRNA molecules, the mRNA and conformational changes in the ribosome. This Symbiobacterium thermophilum (strain DSM 24528 / JCM 14929 / IAM 14863 / T) protein is Elongation factor G.